The primary structure comprises 365 residues: Aminomethyltransferase (365 aa).

It belongs to the GcvT family. As to quaternary structure, the glycine cleavage system is composed of four proteins: P, T, L and H.

The catalysed reaction is N(6)-[(R)-S(8)-aminomethyldihydrolipoyl]-L-lysyl-[protein] + (6S)-5,6,7,8-tetrahydrofolate = N(6)-[(R)-dihydrolipoyl]-L-lysyl-[protein] + (6R)-5,10-methylene-5,6,7,8-tetrahydrofolate + NH4(+). The glycine cleavage system catalyzes the degradation of glycine. The sequence is that of Aminomethyltransferase from Desulfitobacterium hafniense (strain DSM 10664 / DCB-2).